Reading from the N-terminus, the 1486-residue chain is Chromosome partition protein MukB (1486 aa).

34-41 (GGNGAGKS) provides a ligand contact to ATP. 3 coiled-coil regions span residues 326 to 418 (LEAD…QYNQ), 444 to 480 (LETF…QAYQ), and 509 to 603 (RHLA…RAPV). Residues 666–783 (PGGSEDQRLN…EVPLFGRAAR (118 aa)) form a flexible hinge region. Coiled coils occupy residues 835-923 (EAEI…AKLE), 977-1115 (EMLS…TAKA), and 1209-1266 (VEAI…QNVS).

This sequence belongs to the SMC family. MukB subfamily. In terms of assembly, homodimerization via its hinge domain. Binds to DNA via its C-terminal region. Interacts, and probably forms a ternary complex, with MukE and MukF via its C-terminal region. The complex formation is stimulated by calcium or magnesium. Interacts with tubulin-related protein FtsZ.

It localises to the cytoplasm. It is found in the nucleoid. In terms of biological role, plays a central role in chromosome condensation, segregation and cell cycle progression. Functions as a homodimer, which is essential for chromosome partition. Involved in negative DNA supercoiling in vivo, and by this means organize and compact chromosomes. May achieve or facilitate chromosome segregation by condensation DNA from both sides of a centrally located replisome during cell division. This is Chromosome partition protein MukB from Escherichia coli (strain K12 / MC4100 / BW2952).